Consider the following 426-residue polypeptide: Probable imidazolonepropionase (426 aa).

2 residues coordinate 4-imidazolone-5-propanoate: Tyr-159 and His-192. Tyr-159 is an N-formimidoyl-L-glutamate binding site. Position 260 (His-260) interacts with Fe(3+). Residue His-260 coordinates Zn(2+). Glu-263 is a binding site for 4-imidazolone-5-propanoate. Residue Asp-334 participates in Fe(3+) binding. Zn(2+) is bound at residue Asp-334. Asn-336 contributes to the N-formimidoyl-L-glutamate binding site.

This sequence belongs to the metallo-dependent hydrolases superfamily. HutI family. The cofactor is Zn(2+). It depends on Fe(3+) as a cofactor.

It catalyses the reaction 4-imidazolone-5-propanoate + H2O = N-formimidoyl-L-glutamate. The protein operates within amino-acid degradation; L-histidine degradation into L-glutamate; N-formimidoyl-L-glutamate from L-histidine: step 3/3. The polypeptide is Probable imidazolonepropionase (AMDHD1) (Bos taurus (Bovine)).